A 773-amino-acid polypeptide reads, in one-letter code: Mitochondrial inner membrane m-AAA protease component yta12 (773 aa).

Positions 83 to 119 (FSVTSKRSQNGSSGSNSDANGRKNGQKNDDSKKKGLN) are disordered. Residues 87-101 (SKRSQNGSSGSNSDA) are compositionally biased toward low complexity. Helical transmembrane passes span 126–146 (VFEI…AYIL) and 239–259 (VLAT…VIYL). ATP is bound by residues Val298, Ala299, Thr340, Gly341, Lys342, Thr343, Leu344, and His479. A Zn(2+)-binding site is contributed by His561. The active site involves Glu562. Zn(2+)-binding residues include His565 and Asp638. A disordered region spans residues 752–773 (EYKNDHDPRNPPIPPSPQQPSA). Over residues 761–773 (NPPIPPSPQQPSA) the composition is skewed to pro residues.

In the N-terminal section; belongs to the AAA ATPase family. It in the C-terminal section; belongs to the peptidase M41 family. In terms of assembly, component of the m-AAA protease complex. It depends on Zn(2+) as a cofactor.

It is found in the mitochondrion membrane. The enzyme catalyses ATP + H2O = ADP + phosphate + H(+). Functionally, catalytic component of the m-AAA protease, a protease that plays a key role in proteostasis of inner mitochondrial membrane proteins. Possesses both ATPase and protease activities: the ATPase activity is required to unfold substrates, threading them into the internal proteolytic cavity for hydrolysis into small peptide fragments. The complex is necessary for the assembly of mitochondrial respiratory chain and ATPase complexes. The m-AAA protease carries out protein quality control in the inner membrane of the mitochondria by mediating degradation of mistranslated or misfolded polypeptides. It also mediates protein maturation of the mitochondrial ribosomal subunit mrpl32/bL32m by catalyzing the cleavage of the presequence of mrpl32/bL32m prior to assembly into the mitochondrial ribosome. Also acts as a membrane protein dislocase: required to dislocate moderately hydrophobic transmembrane segments from the membrane. In Schizosaccharomyces pombe (strain 972 / ATCC 24843) (Fission yeast), this protein is Mitochondrial inner membrane m-AAA protease component yta12 (yta12).